Reading from the N-terminus, the 337-residue chain is Putative transcription activator protein HfaB (337 aa).

Residues 303 to 313 (AYNNLGTNNAQ) are compositionally biased toward polar residues. A disordered region spans residues 303-337 (AYNNLGTNNAQTRDDPSRWNARRDPDIRDAKRGRY). Positions 314–337 (TRDDPSRWNARRDPDIRDAKRGRY) are enriched in basic and acidic residues.

Required for the attachment of the holdfast to the cell. May be involved in the positive regulation of hfaC. In Caulobacter vibrioides (strain ATCC 19089 / CIP 103742 / CB 15) (Caulobacter crescentus), this protein is Putative transcription activator protein HfaB (hfaB).